The sequence spans 417 residues: Exodeoxyribonuclease 7 large subunit (417 aa).

Belongs to the XseA family. Heterooligomer composed of large and small subunits.

It is found in the cytoplasm. It carries out the reaction Exonucleolytic cleavage in either 5'- to 3'- or 3'- to 5'-direction to yield nucleoside 5'-phosphates.. Bidirectionally degrades single-stranded DNA into large acid-insoluble oligonucleotides, which are then degraded further into small acid-soluble oligonucleotides. This is Exodeoxyribonuclease 7 large subunit from Lactococcus lactis subsp. lactis (strain IL1403) (Streptococcus lactis).